Consider the following 346-residue polypeptide: Ephrin-B1 (346 aa).

The N-terminal stretch at methionine 1–proline 27 is a signal peptide. Over leucine 28–lysine 237 the chain is Extracellular. An Ephrin RBD domain is found at lysine 30–valine 164. Intrachain disulfides connect cysteine 64–cysteine 101 and cysteine 89–cysteine 153. Asparagine 139 is a glycosylation site (N-linked (GlcNAc...) asparagine). Residues asparagine 169–glycine 228 are disordered. Over residues serine 205–serine 218 the composition is skewed to basic and acidic residues. The chain crosses the membrane as a helical span at residues valine 238 to leucine 258. Over threonine 259–valine 346 the chain is Cytoplasmic. A Nuclear localization signal motif is present at residues valine 260–threonine 273. Residues leucine 263–threonine 294 are interaction with ZHX2. Residues serine 281 and serine 287 each carry the phosphoserine modification. Positions tyrosine 344–valine 346 match the PDZ-binding motif.

This sequence belongs to the ephrin family. In terms of assembly, interacts (via PDZ-binding motif) with GRIP1 and GRIP2 (via PDZ domain 6). Interacts with TLE1. The intracellular domain peptide interacts with ZHX2; the interaction enhances ZHX2 transcriptional repression activity. Post-translationally, inducible phosphorylation of tyrosine residues in the cytoplasmic domain. In terms of processing, proteolytically processed. The ectodomain is cleaved, probably by a metalloprotease, to produce a membrane-tethered C-terminal fragment. This fragment is then further processed by the gamma-secretase complex to yield a soluble intracellular domain peptide which can translocate to the nucleus. The intracellular domain peptide is highly labile suggesting that it is targeted for degradation by the proteasome. Widely expressed. Detected in both neuronal and non-neuronal tissues. Seems to have particularly strong expression in retina, sciatic nerve, heart and spinal cord.

The protein localises to the cell membrane. It is found in the membrane raft. The protein resides in the nucleus. In terms of biological role, cell surface transmembrane ligand for Eph receptors, a family of receptor tyrosine kinases which are crucial for migration, repulsion and adhesion during neuronal, vascular and epithelial development. Binding to Eph receptors residing on adjacent cells leads to contact-dependent bidirectional signaling into neighboring cells. Shows high affinity for the receptor tyrosine kinase EPHB1/ELK. Can also bind EPHB2 and EPHB3. Binds to, and induces collapse of, commissural axons/growth cones in vitro. May play a role in constraining the orientation of longitudinally projecting axons. In Homo sapiens (Human), this protein is Ephrin-B1 (EFNB1).